The following is a 266-amino-acid chain: Chorismate mutase (266 aa).

One can recognise a Chorismate mutase domain in the interval 7-263 (MADSERALNL…EVEYLMQRLI (257 aa)). L-tyrosine-binding residues include R77, R78, N144, G146, S147, and T150. Residues N144, G146, and S147 each coordinate L-tryptophan.

Homodimer.

The protein resides in the cytoplasm. It catalyses the reaction chorismate = prephenate. The protein operates within metabolic intermediate biosynthesis; prephenate biosynthesis; prephenate from chorismate: step 1/1. Its activity is regulated as follows. Each dimer has two allosteric binding sites that can bind the regulatory effectors tryptophan or tyrosine. Can bind either one tryptophan or one tyrosine, two tryptophan or two tyrosine or one tryptophan and one tyrosine, which differentially affect the catalytic activity. Activated by tryptophan and subject to feedback inhibition by tyrosine. In the presence of both tryptophan and tyrosine, the enzyme is in the activated state. Its function is as follows. Catalyzes the Claisen rearrangement of chorismate to prephenate. Acts at the first branch point in the aromatic amino acid pathway where it steers biosynthesis towards phenylalanine and tyrosine, and away from tryptophan. In Trichoderma parareesei (Filamentous fungus), this protein is Chorismate mutase.